The sequence spans 296 residues: Bidirectional sugar transporter SWEET13 (296 aa).

Topologically, residues 1–9 (MAGLSLQHP) are extracellular. Residues 10-30 (WAFAFGLLGNLISFTTYLAPI) traverse the membrane as a helical segment. The region spanning 13 to 98 (AFGLLGNLIS…VMYLAYAPKK (86 aa)) is the MtN3/slv 1 domain. The Cytoplasmic portion of the chain corresponds to 31–45 (PTFYRIYKSKSTEGF). The chain crosses the membrane as a helical span at residues 46 to 66 (QSVPYVVALFSAMLWIFYALI). At 67 to 71 (KSNEA) the chain is on the extracellular side. The helical transmembrane segment at 72 to 92 (LLITINAAGCVIETIYIVMYL) threads the bilayer. Topologically, residues 93-105 (AYAPKKAKVFTTK) are cytoplasmic. The helical transmembrane segment at 106–126 (ILLLLNVGVFGVILLLTLLLS) threads the bilayer. Residues 127 to 133 (HGEQRVV) are Extracellular-facing. A helical membrane pass occupies residues 134 to 154 (SLGWVCVAFSVSVFVAPLSII). In terms of domain architecture, MtN3/slv 2 spans 134 to 217 (SLGWVCVAFS…MGLYVFYMNA (84 aa)). Topologically, residues 155–167 (KRVIQSRSVEYMP) are cytoplasmic. A helical membrane pass occupies residues 168–188 (FSLSLTLTLSAVVWFLYGLLI). Residues 189–192 (KDKY) are Extracellular-facing. Residues 193–213 (VALPNILGFTFGVVQMGLYVF) form a helical membrane-spanning segment. Residues 214 to 296 (YMNATPVAGE…PPRAVEVAAV (83 aa)) lie on the Cytoplasmic side of the membrane.

Belongs to the SWEET sugar transporter family. As to quaternary structure, forms homooligomers and/or heterooligomers.

It localises to the cell membrane. Functionally, mediates both low-affinity uptake and efflux of sugar across the plasma membrane. In terms of biological role, confers blight susceptibility. Confers TAL effector-mediated susceptibility to Xanthomonas oryzae pv. oryzae. This is Bidirectional sugar transporter SWEET13 (SWEET13) from Oryza sativa subsp. japonica (Rice).